An 820-amino-acid polypeptide reads, in one-letter code: SART-1 family protein DOT2 (820 aa).

Composition is skewed to basic and acidic residues over residues 1–156 (MEVE…DNRG), 210–219 (EEKRNAEKQR), and 426–445 (LGSRKDGRRQAMKEEKERIE). Disordered stretches follow at residues 1–177 (MEVE…SALD), 210–248 (EEKRNAEKQRAQQLSRIFEEQDNLNQGENEDGEDGEHLS), 420–445 (GLGAEDLGSRKDGRRQAMKEEKERIE), 523–544 (SSTNQTTDDNTTTGDETQENTV), 564–617 (KPES…PDEN), 657–678 (KLVGIVDDDGGKESKDKESKDR), 729–748 (KLKQMKNSDTPSQSVQRMRE), and 762–820 (GHVK…RPKP). S22 is subject to Phosphoserine. 3 coiled-coil regions span residues 58–120 (RDKE…EKEK), 171–235 (KEAS…NLNQ), and 433–510 (RRQA…KEEA). Over residues 525–543 (TNQTTDDNTTTGDETQENT) the composition is skewed to low complexity. Over residues 582 to 591 (VEVKEEHPDG) the composition is skewed to basic and acidic residues. Residues 596-606 (NDTDMDAAEDS) are compositionally biased toward acidic residues. 2 stretches are compositionally biased toward basic and acidic residues: residues 607-617 (SDTKEITPDEN) and 665-678 (DGGKESKDKESKDR). Composition is skewed to polar residues over residues 733–744 (MKNSDTPSQSVQ) and 767–776 (GQTSDPQSGF). Residues 792-807 (GDRKVEHFLGIKRKSE) are compositionally biased toward basic and acidic residues.

This sequence belongs to the SNU66/SART1 family. Expressed in lateral root cap, columella, meristem and quiescent center (QC). Expressed in young leaves.

Its subcellular location is the nucleus. Its function is as follows. Plays a role in root, shoot and flower development. Probably required for normal root and shoot meristem organization and maintenance and the proper expression of PIN and PLT genes. Involved in leaf vasculature patterning. The polypeptide is SART-1 family protein DOT2 (Arabidopsis thaliana (Mouse-ear cress)).